The sequence spans 342 residues: tRNA N6-adenosine threonylcarbamoyltransferase (342 aa).

2 residues coordinate Fe cation: His111 and His115. Substrate is bound by residues 133–137, Asp166, Gly179, Asp183, and Asn273; that span reads AVSGG. Asp301 provides a ligand contact to Fe cation.

This sequence belongs to the KAE1 / TsaD family. Requires Fe(2+) as cofactor.

It is found in the cytoplasm. It catalyses the reaction L-threonylcarbamoyladenylate + adenosine(37) in tRNA = N(6)-L-threonylcarbamoyladenosine(37) in tRNA + AMP + H(+). Required for the formation of a threonylcarbamoyl group on adenosine at position 37 (t(6)A37) in tRNAs that read codons beginning with adenine. Is involved in the transfer of the threonylcarbamoyl moiety of threonylcarbamoyl-AMP (TC-AMP) to the N6 group of A37, together with TsaE and TsaB. TsaD likely plays a direct catalytic role in this reaction. The polypeptide is tRNA N6-adenosine threonylcarbamoyltransferase (Syntrophotalea carbinolica (strain DSM 2380 / NBRC 103641 / GraBd1) (Pelobacter carbinolicus)).